A 122-amino-acid chain; its full sequence is Large ribosomal subunit protein uL18 (122 aa).

The disordered stretch occupies residues 1-27; sequence MSNLSRKQQTQKRHRRLRRHLNGTAQR. Residues 9-21 are compositionally biased toward basic residues; it reads QTQKRHRRLRRHL.

This sequence belongs to the universal ribosomal protein uL18 family. In terms of assembly, part of the 50S ribosomal subunit; part of the 5S rRNA/L5/L18/L25 subcomplex. Contacts the 5S and 23S rRNAs.

This is one of the proteins that bind and probably mediate the attachment of the 5S RNA into the large ribosomal subunit, where it forms part of the central protuberance. The chain is Large ribosomal subunit protein uL18 from Prochlorococcus marinus (strain MIT 9303).